The chain runs to 288 residues: Translocon-associated protein subunit alpha (288 aa).

The signal sequence occupies residues methionine 1–alanine 28. The Lumenal portion of the chain corresponds to aspartate 29–threonine 208. The segment at glutamate 34–isoleucine 69 is disordered. N-linked (GlcNAc...) asparagine glycans are attached at residues asparagine 137 and asparagine 192. The helical transmembrane segment at isoleucine 209–valine 229 threads the bilayer. Over leucine 230–glutamine 288 the chain is Cytoplasmic. Positions lysine 267 to glutamine 288 are disordered.

This sequence belongs to the TRAP-alpha family. Heterotetramer of TRAP-alpha, TRAP-beta, TRAP-delta and TRAP-gamma. Phosphorylated in its cytoplasmic tail.

The protein resides in the endoplasmic reticulum membrane. Functionally, TRAP proteins are part of a complex whose function is to bind calcium to the ER membrane and thereby regulate the retention of ER resident proteins. May be involved in the recycling of the translocation apparatus after completion of the translocation process or may function as a membrane-bound chaperone facilitating folding of translocated proteins. The chain is Translocon-associated protein subunit alpha (ssr1) from Oncorhynchus mykiss (Rainbow trout).